Consider the following 229-residue polypeptide: 4-hydroxy-tetrahydrodipicolinate reductase (229 aa).

NAD(+) contacts are provided by residues 10–15 (GSAGRM), 78–80 (GTT), and 102–105 (SSNM). Histidine 133 functions as the Proton donor/acceptor in the catalytic mechanism. Histidine 134 lines the (S)-2,3,4,5-tetrahydrodipicolinate pocket. Lysine 137 functions as the Proton donor in the catalytic mechanism. 143–144 (GT) contacts (S)-2,3,4,5-tetrahydrodipicolinate.

The protein belongs to the DapB family.

It is found in the cytoplasm. It catalyses the reaction (S)-2,3,4,5-tetrahydrodipicolinate + NAD(+) + H2O = (2S,4S)-4-hydroxy-2,3,4,5-tetrahydrodipicolinate + NADH + H(+). The enzyme catalyses (S)-2,3,4,5-tetrahydrodipicolinate + NADP(+) + H2O = (2S,4S)-4-hydroxy-2,3,4,5-tetrahydrodipicolinate + NADPH + H(+). It participates in amino-acid biosynthesis; L-lysine biosynthesis via DAP pathway; (S)-tetrahydrodipicolinate from L-aspartate: step 4/4. In terms of biological role, catalyzes the conversion of 4-hydroxy-tetrahydrodipicolinate (HTPA) to tetrahydrodipicolinate. The chain is 4-hydroxy-tetrahydrodipicolinate reductase from Bdellovibrio bacteriovorus (strain ATCC 15356 / DSM 50701 / NCIMB 9529 / HD100).